A 156-amino-acid polypeptide reads, in one-letter code: MPRRREVPKRDILPDPKFGNVEVSKFVNAIMQSGKKSVAERIVYGAFDIITTKGGKDPLEVFSAAMSNVKPMVEVKSRRVGGANYQVPVEVRPARRAALAMRWLRESARKRSEKSMGQRLAAEMLEAAENRGGAVKKRDEVHRMAEANKAFAHFRF.

The protein belongs to the universal ribosomal protein uS7 family. As to quaternary structure, part of the 30S ribosomal subunit. Contacts proteins S9 and S11.

Functionally, one of the primary rRNA binding proteins, it binds directly to 16S rRNA where it nucleates assembly of the head domain of the 30S subunit. Is located at the subunit interface close to the decoding center, probably blocks exit of the E-site tRNA. This chain is Small ribosomal subunit protein uS7, found in Dechloromonas aromatica (strain RCB).